Consider the following 135-residue polypeptide: DFNCLPGWSAYDQHCYQAFNEPKTWDEAERFCTEQAKRGHLVSIGSDGEADFVAQLVTNNIKRPELYVWIGLRDRRKEQQCSSEWSMSASIIYVNWNTGESQMCQGLARWTGFRKWDYSDCQAKNPFVCKFPSEC.

Cystine bridges form between cysteine 4/cysteine 15, cysteine 32/cysteine 129, and cysteine 104/cysteine 121. Residues 11–130 (YDQHCYQAFN…CQAKNPFVCK (120 aa)) enclose the C-type lectin domain.

It belongs to the snaclec family. In terms of assembly, heterotetramer of subunit alpha, beta, gamma and delta; only the gamma and the delta subunits are disulfide-linked. Alpha-beta heterodimer and gamma-delta heterodimer associate orthogonally, giving a cruciform conformation. This heterotetramer may covalently dimerizes thanks to the gamma subunit. As to expression, expressed by the venom gland.

The protein localises to the secreted. Potent inhibitor of collagen-induced platelet aggregation. It acts by binding to the integrin alpha2A domain and blocks collagen binding to integrin alpha-2/beta-1 (ITGA2/ITGB1). The gamma/delta subunits mainly contribute to this activity. In Calloselasma rhodostoma (Malayan pit viper), this protein is Snaclec rhodocetin subunit gamma.